The chain runs to 300 residues: MKVIKTLSIINFFIFVTFNIKNESKYSNTFINNAYNMSIRRSMEESKPPTGAVAGSGAGAGSGAGAVAGSGAGAVAGSGAGAVAGSGAGAVAGSGAGAVAGSGAVAGSGAGNGANPGADAERSPSTPATTTTTTTTNDAEASTSTSSENRNHNNAETNPKGKGEVQKPNQANKETQNNSNVQQDSQTKSNVPRTQDADTKSPTAQPEQAENSAPTAEQTESPELQSAPENKGTGQHGHMHGSRNNHPQNTSDSQKECTDGNKENCGAATSLLNNSSNIASINKFVVLISATLVLSFAIFI.

The N-terminal stretch at 1–20 (MKVIKTLSIINFFIFVTFNI) is a signal peptide. N-linked (GlcNAc...) asparagine glycans are attached at residues Asn-22 and Asn-36. Positions 44–226 (EESKPPTGAV…EQTESPELQS (183 aa)) are polymorphic region. One copy of the 1; inverted repeat lies at 51-58 (GAVAGSGA). Positions 51–110 (GAVAGSGAGAGSGAGAVAGSGAGAVAGSGAGAVAGSGAGAVAGSGAGAVAGSGAVAGSGA) are 7 X 8 AA tandem repeats of G-S-G-A-G-A-V-A. A run of 5 repeats spans residues 61–68 (GSGAGAVA), 69–76 (GSGAGAVA), 77–84 (GSGAGAVA), 85–92 (GSGAGAVA), and 93–100 (GSGAGAVA). The stretch at 103–110 (GAVAGSGA) is one 7; inverted repeat. The segment at 111-261 (GNGANPGADA…DSQKECTDGN (151 aa)) is disordered. A compositionally biased stretch (low complexity) spans 123–148 (SPSTPATTTTTTTTNDAEASTSTSSE). Basic and acidic residues predominate over residues 149 to 165 (NRNHNNAETNPKGKGEV). Composition is skewed to polar residues over residues 167 to 193 (KPNQ…NVPR) and 200 to 228 (KSPT…QSAP). Asn-177 carries N-linked (GlcNAc...) asparagine glycosylation. A glycan (N-linked (GlcNAc...) asparagine) is linked at Asn-249. Residues Cys-257 and Cys-265 are joined by a disulfide bond. N-linked (GlcNAc...) asparagine glycosylation is found at Asn-273 and Asn-274. Asn-274 carries the GPI-anchor amidated asparagine lipid modification. Residues 275–300 (SSNIASINKFVVLISATLVLSFAIFI) constitute a propeptide, removed in mature form.

It is found in the cell membrane. May play a role in the merozoite attachment to the erythrocyte. The protein is Merozoite surface protein 2 of Plasmodium falciparum (isolate imr143).